Consider the following 650-residue polypeptide: Chaperone protein DnaK (650 aa).

A Phosphothreonine; by autocatalysis modification is found at T200. The span at G612–Q632 shows a compositional bias: low complexity. Residues G612 to K650 are disordered. The segment covering A641–K650 has biased composition (basic and acidic residues).

The protein belongs to the heat shock protein 70 family.

In terms of biological role, acts as a chaperone. The sequence is that of Chaperone protein DnaK from Cupriavidus necator (strain ATCC 17699 / DSM 428 / KCTC 22496 / NCIMB 10442 / H16 / Stanier 337) (Ralstonia eutropha).